The sequence spans 571 residues: Proline--tRNA ligase (571 aa).

This sequence belongs to the class-II aminoacyl-tRNA synthetase family. ProS type 1 subfamily. In terms of assembly, homodimer.

It is found in the cytoplasm. The enzyme catalyses tRNA(Pro) + L-proline + ATP = L-prolyl-tRNA(Pro) + AMP + diphosphate. Functionally, catalyzes the attachment of proline to tRNA(Pro) in a two-step reaction: proline is first activated by ATP to form Pro-AMP and then transferred to the acceptor end of tRNA(Pro). As ProRS can inadvertently accommodate and process non-cognate amino acids such as alanine and cysteine, to avoid such errors it has two additional distinct editing activities against alanine. One activity is designated as 'pretransfer' editing and involves the tRNA(Pro)-independent hydrolysis of activated Ala-AMP. The other activity is designated 'posttransfer' editing and involves deacylation of mischarged Ala-tRNA(Pro). The misacylated Cys-tRNA(Pro) is not edited by ProRS. The chain is Proline--tRNA ligase from Pseudomonas syringae pv. tomato (strain ATCC BAA-871 / DC3000).